We begin with the raw amino-acid sequence, 364 residues long: Fructose-1,6-bisphosphatase class 1 2 (364 aa).

4 residues coordinate Mg(2+): Glu101, Asp123, Leu125, and Asp126. Residues Asp126–Ser129 and Asn218 contribute to the substrate site. Glu290 is a binding site for Mg(2+).

Belongs to the FBPase class 1 family. As to quaternary structure, homotetramer. Mg(2+) serves as cofactor.

The protein resides in the cytoplasm. It catalyses the reaction beta-D-fructose 1,6-bisphosphate + H2O = beta-D-fructose 6-phosphate + phosphate. The protein operates within carbohydrate biosynthesis; gluconeogenesis. This Cupriavidus necator (strain ATCC 17699 / DSM 428 / KCTC 22496 / NCIMB 10442 / H16 / Stanier 337) (Ralstonia eutropha) protein is Fructose-1,6-bisphosphatase class 1 2.